A 245-amino-acid chain; its full sequence is Cell division protein ZapD (245 aa).

Belongs to the ZapD family. Interacts with FtsZ.

Its subcellular location is the cytoplasm. Its function is as follows. Cell division factor that enhances FtsZ-ring assembly. Directly interacts with FtsZ and promotes bundling of FtsZ protofilaments, with a reduction in FtsZ GTPase activity. The polypeptide is Cell division protein ZapD (Photobacterium profundum (strain SS9)).